We begin with the raw amino-acid sequence, 386 residues long: MGFDLATDLAARRRQHRYRQARIMDGPSGRHALLGGRQYLNFCSNDYLGLANDPAVVAAFQQGAADWGVGSGASHLVCGHQRPHQQLEEALAAHTGRQRALLFSTGYMANLGVMTALLSKGDAVFQDRLNHASLLDGGLLSGARFRRFPHNDGQALASQLARSEARRKLVVVDGVFSMDGDEAPLVDYAEACEGHDAWLMVDDAHGIGVLDAQGRGSVFTQGVNERVPVLMGTLGKGLGTAGAFVAGSDELIETLIQFARTFIYTTAMPAAVASATLVSLRKSREENWRRDTLAELIARFRQGARALGYTLMPSQTPIQPLLIGSDVDATALSEALREKGFLITAIRPPTVREGEARLRVTLSAAHEVEDVDALLAALAQCQTQDV.

R19 contributes to the substrate binding site. A pyridoxal 5'-phosphate-binding site is contributed by 106-107 (GY). H131 is a binding site for substrate. S177, H205, and T233 together coordinate pyridoxal 5'-phosphate. K236 carries the post-translational modification N6-(pyridoxal phosphate)lysine. T350 contributes to the substrate binding site.

Belongs to the class-II pyridoxal-phosphate-dependent aminotransferase family. BioF subfamily. As to quaternary structure, homodimer. Pyridoxal 5'-phosphate is required as a cofactor.

It carries out the reaction 6-carboxyhexanoyl-[ACP] + L-alanine + H(+) = (8S)-8-amino-7-oxononanoate + holo-[ACP] + CO2. The protein operates within cofactor biosynthesis; biotin biosynthesis. In terms of biological role, catalyzes the decarboxylative condensation of pimeloyl-[acyl-carrier protein] and L-alanine to produce 8-amino-7-oxononanoate (AON), [acyl-carrier protein], and carbon dioxide. The sequence is that of 8-amino-7-oxononanoate synthase from Alcanivorax borkumensis (strain ATCC 700651 / DSM 11573 / NCIMB 13689 / SK2).